The chain runs to 673 residues: MDHSCTRFIHRRGPPTRTRAGFKRGKRPRIQQRPRARVSGTIPASRLHPAPASQPGPCPAPGHCPVGPAHERPMGSSQEEGLRCQPSQPDHDADGHCGPDLEGAERASATPGPPGLLNSHRPADSDDTNAAGPSAALLEGLLLGGGKPSPHSTRPGPFFYIGGSNGATIISSYCKSKGWQRIHDSRRDDYTLKWCEVKSRDSYGSFREGEQLLYQLPNNKLLTTKIGLLSTLRGRARAMSKASKVPGGVQARLEKDAAAPALEDLPWTSPGYLRPQRVLRMEEFFPETYRLDLKHEREAFFTLFDETQIWICKPTASNQGKGIFLLRNQEEVAALQAKTRSMEDDPIHHKTPFRGPQARVVQRYIQNPLLVDGRKFDVRSYLLIACTTPYMIFFGHGYARLTLSLYDPHSSDLGGHLTNQFMQKKSPLYMLLKEHTVWSMEHLNRYISDTFWKARGLAKDWVFTTLKKRMQQIMAHCFLAAKPKLDCKLGYFDLIGCDFLIDDNFKVWLLEMNSNPALHTNCEVLKEVIPGVVIETLDLVLETFRKSLRGQKMLPLLSQRRFVLLHNGEADPRPHLGGSCSLRRWPPLPTRQAKSSGPPMPHAPDQPGARRPAPPPLVPQRPRPPGPDLDSAHDGEPQAPGTEQSGTGNRHPAQEPSPGTAKEEREEPENARP.

The interval 1–132 (MDHSCTRFIH…ADSDDTNAAG (132 aa)) is disordered. Over residues 8–36 (FIHRRGPPTRTRAGFKRGKRPRIQQRPRA) the composition is skewed to basic residues. The span at 52–62 (ASQPGPCPAPG) shows a compositional bias: pro residues. Residues 89 to 105 (PDHDADGHCGPDLEGAE) are compositionally biased toward basic and acidic residues. Positions 155-552 (PGPFFYIGGS…TFRKSLRGQK (398 aa)) constitute a TTL domain. Residues 362–365 (QRYI), Lys-375, and Asp-377 each bind ATP. The tract at residues 569–673 (EADPRPHLGG…EREEPENARP (105 aa)) is disordered. Over residues 612-627 (PAPPPLVPQRPRPPGP) the composition is skewed to pro residues. Over residues 661 to 673 (AKEEREEPENARP) the composition is skewed to basic and acidic residues.

Inactive polyglycylase. The sequence is that of Inactive polyglycylase TTLL10 from Homo sapiens (Human).